We begin with the raw amino-acid sequence, 327 residues long: uncharacterized protein (327 aa).

2 disordered regions span residues 127 to 170 and 298 to 327; these read LSEF…GIYR and NFED…LKRR. Residues S153, S154, and S309 each carry the phosphoserine modification. Residues 317 to 327 show a composition bias toward basic residues; sequence YRKRKKNLKRR.

This is an uncharacterized protein from Schizosaccharomyces pombe (strain 972 / ATCC 24843) (Fission yeast).